Here is a 375-residue protein sequence, read N- to C-terminus: NADH-ubiquinone oxidoreductase 40 kDa subunit, mitochondrial (375 aa).

Residues 1 to 26 constitute a mitochondrion transit peptide; the sequence is MAPLTAAMRSTPRIIVSNAFGFQRRA.

Belongs to the complex I NDUFA9 subunit family. As to quaternary structure, complex I is composed of about 40 different subunits. It depends on FAD as a cofactor.

The protein resides in the mitochondrion matrix. Functionally, accessory subunit of the mitochondrial membrane respiratory chain NADH dehydrogenase (Complex I), that is believed not to be involved in catalysis. Complex I functions in the transfer of electrons from NADH to the respiratory chain. The immediate electron acceptor for the enzyme is believed to be ubiquinone. The protein is NADH-ubiquinone oxidoreductase 40 kDa subunit, mitochondrial (nuo40) of Neurospora crassa (strain ATCC 24698 / 74-OR23-1A / CBS 708.71 / DSM 1257 / FGSC 987).